We begin with the raw amino-acid sequence, 382 residues long: D-galactonate dehydratase (382 aa).

Asp-183 provides a ligand contact to Mg(2+). Catalysis depends on His-185, which acts as the Proton donor. Positions 209 and 235 each coordinate Mg(2+). His-285 functions as the Proton acceptor in the catalytic mechanism.

Belongs to the mandelate racemase/muconate lactonizing enzyme family. GalD subfamily. The cofactor is Mg(2+).

The enzyme catalyses D-galactonate = 2-dehydro-3-deoxy-D-galactonate + H2O. It participates in carbohydrate acid metabolism; D-galactonate degradation; D-glyceraldehyde 3-phosphate and pyruvate from D-galactonate: step 1/3. Its function is as follows. Catalyzes the dehydration of D-galactonate to 2-keto-3-deoxy-D-galactonate. The chain is D-galactonate dehydratase from Salmonella dublin (strain CT_02021853).